The chain runs to 376 residues: Putative endoglucanase type K (376 aa).

Positions 1–18 (MRSYTLLALAGPLAVSAA) are cleaved as a signal peptide. The catalytic stretch occupies residues 19–308 (SGSGHSTRYW…ATKPAQPVNK (290 aa)). D29 serves as the catalytic Nucleophile. D140 functions as the Proton donor in the catalytic mechanism. Positions 229-332 (AFKGDTSASK…SCPAKTDATA (104 aa)) are disordered. 2 stretches are compositionally biased toward low complexity: residues 235–258 (SASKPQPSSSAKKTTSAAAAAQPQ) and 291–306 (KPVATKPAATKPAQPV). Positions 309-338 (PKTTQKVRGTKTRGSCPAKTDATAKASVVP) are linker. The CBM1 domain maps to 335 to 374 (SVVPAYYQCGGSKSAYPNGNLACATGSKCVKQNEYYSQCV).

Belongs to the glycosyl hydrolase 45 (cellulase K) family.

It catalyses the reaction Endohydrolysis of (1-&gt;4)-beta-D-glucosidic linkages in cellulose, lichenin and cereal beta-D-glucans.. This chain is Putative endoglucanase type K, found in Fusarium oxysporum (Fusarium vascular wilt).